A 331-amino-acid polypeptide reads, in one-letter code: Major outer membrane protein P.IB (331 aa).

An N-terminal signal peptide occupies residues 1 to 19 (MKKSLIALTLAALPVAAMA).

It belongs to the Gram-negative porin family. As to quaternary structure, homotrimer.

The protein localises to the cell outer membrane. In terms of biological role, serves as a slightly cation selective porin. This Neisseria meningitidis serogroup B protein is Major outer membrane protein P.IB (porB).